The sequence spans 470 residues: N amino acid transport system protein (470 aa).

Residues 1–11 (MDSQYETKKND) show a composition bias toward basic and acidic residues. Residues 1 to 21 (MDSQYETKKNDPNAIMPYPES) form a disordered region. Residues 1-56 (MDSQYETKKNDPNAIMPYPESNDEHVGEVRGLGGGIMDKEPEAQEGHAKFHRLGWK) are Extracellular-facing. Helical transmembrane passes span 57–77 (RLTVVLIVEAIALGSLSLPGA) and 78–98 (FATLGMVPGVILSVGMGLICI). The Extracellular segment spans residues 99–131 (YTAHVIGQTKLKHPEIAHYADVGRVMFGRWGYE). Residues 132–152 (IISFMFVLQLIFIVGSHVLTG) traverse the membrane as a helical segment. The Cytoplasmic segment spans residues 153–168 (TIMWGTITDNGNGTCS). Helical transmembrane passes span 169-189 (LVFGIVSAIILFLLAIPPSFA) and 191-211 (VAILGYIDFVSICAAILITMI). At 212–236 (ATGIRSSHQEGGLAAVPWSCWPKED) the chain is on the cytoplasmic side. The helical transmembrane segment at 237–257 (LSLAEGFIAVSNIVFAYSFAM) threads the bilayer. Over 258–275 (CQFSFMDEMHTPSDYKKS) the chain is Extracellular. The chain crosses the membrane as a helical span at residues 276-296 (IVALGLIEIFIYTVTGGVVYA). The Cytoplasmic portion of the chain corresponds to 297–316 (FVGPEVQSPALLSAGPLLAK). A helical transmembrane segment spans residues 317 to 337 (VAFGIALPVIFISGSINTVVV). Over 338 to 357 (SRYLIERIWPNNVIRYVNTP) the chain is Extracellular. Residues 358-378 (AGWMVWLGFDFGITLIAWVIA) traverse the membrane as a helical segment. Topologically, residues 379–386 (EAIPFFSD) are cytoplasmic. The chain crosses the membrane as a helical span at residues 387 to 407 (LLAICSALFISGFSFYFPALM). At 408–427 (YFKITRNDAKSQGKKYFLDA) the chain is on the extracellular side. Residues 428 to 448 (LNMLCFVIGMGILGIGTYAAI) traverse the membrane as a helical segment. Topologically, residues 449 to 470 (QDIMDRYDHGKVSKPYSCAPLA) are cytoplasmic.

Belongs to the amino acid/polyamine transporter 2 family.

The protein localises to the membrane. In terms of biological role, required for the transport of neutral aliphatic and aromatic amino acids via the N system. The chain is N amino acid transport system protein (mtr) from Neurospora crassa (strain ATCC 24698 / 74-OR23-1A / CBS 708.71 / DSM 1257 / FGSC 987).